Reading from the N-terminus, the 215-residue chain is Transcription factor LAX PANICLE 1 (215 aa).

Residues 1–48 (MHDPRGFPIHPQPYHLHPTAGGLGEGRMRGGGRRRPGAKLSTDPQSVA) are disordered. Residues 40–53 (LSTDPQSVAARERR) form a basic motif; degenerate region. Residues 40–89 (LSTDPQSVAARERRHRISDRFRVLRSLVPGGSKMDTVSMLEQAIHYVKFL) form the bHLH domain. Positions 54–89 (HRISDRFRVLRSLVPGGSKMDTVSMLEQAIHYVKFL) are helix-loop-helix motif.

This sequence belongs to the bHLH protein family. In terms of assembly, efficient DNA binding requires dimerization with another bHLH protein. Interacts with LAX2. Expressed in the boundary between the shoot apical meristem (SAM) and the region of new meristem formation.

It localises to the nucleus. Transcription factor that seems to regulate organogenesis in postembryonic development. Involved in the regulation of shoot branching by controlling axillary meristem initiation. Functions in association with LAX2 to regulate the process of AM formation. Possesses transactivation activity in yeast. In Oryza sativa subsp. japonica (Rice), this protein is Transcription factor LAX PANICLE 1.